A 437-amino-acid polypeptide reads, in one-letter code: Regulator of phospholipase D SRF1 (437 aa).

The interval 1–24 is disordered; the sequence is MGDSNSSQEAYSDTTSTNASRIAD. Residues 1 to 267 are Cytoplasmic-facing; sequence MGDSNSSQEA…LTSLLLDNQY (267 aa). 2 positions are modified to phosphoserine: Ser-45 and Ser-167. Residues 268-288 traverse the membrane as a helical segment; sequence LILGLRIFTGILSCISLALAI. At 289 to 308 the chain is on the extracellular side; it reads KIFQNSRSNNTISESKIGQQ. An N-linked (GlcNAc...) asparagine glycan is attached at Asn-297. A helical transmembrane segment spans residues 309 to 329; the sequence is PSTIMAICVNAVAIAYIIYIA. Topologically, residues 330 to 348 are cytoplasmic; that stretch reads HDEFAGKPVGLRNPLSKLK. Residues 349 to 369 traverse the membrane as a helical segment; that stretch reads LILLDLLFIIFSSANLALAFN. Over 370–403 the chain is Extracellular; that stretch reads TRFDKEWVCTSIRRSNGSTYGYPKIPRICRKQEA. A glycan (N-linked (GlcNAc...) asparagine) is linked at Asn-385. A helical transmembrane segment spans residues 404–424; the sequence is LSAFLFVALFMWVITFSISIV. Residues 425–437 are Cytoplasmic-facing; it reads RVVEKVSSITNRN.

Interacts with SPO14.

The protein resides in the membrane. In terms of biological role, regulator of phospholipase D (SPO14) which is required for SPO14 catalytic activity in mitotic cells. Essential to buffer the toxic effects of C16:0 platelet activating factor. The chain is Regulator of phospholipase D SRF1 (SRF1) from Saccharomyces cerevisiae (strain ATCC 204508 / S288c) (Baker's yeast).